A 239-amino-acid chain; its full sequence is uncharacterized protein (239 aa).

It is found in the endoplasmic reticulum. The protein localises to the golgi apparatus. This is an uncharacterized protein from Schizosaccharomyces pombe (strain 972 / ATCC 24843) (Fission yeast).